The primary structure comprises 225 residues: Orotate phosphoribosyltransferase (225 aa).

Lysine 31 lines the 5-phospho-alpha-D-ribose 1-diphosphate pocket. 39–40 (FF) provides a ligand contact to orotate. Residues 78-79 (YK), arginine 105, lysine 106, lysine 109, histidine 111, and 130-138 (DDVLTSGKA) each bind 5-phospho-alpha-D-ribose 1-diphosphate. Positions 134 and 163 each coordinate orotate.

The protein belongs to the purine/pyrimidine phosphoribosyltransferase family. PyrE subfamily. In terms of assembly, homodimer.

The catalysed reaction is orotidine 5'-phosphate + diphosphate = orotate + 5-phospho-alpha-D-ribose 1-diphosphate. Its pathway is pyrimidine metabolism; UMP biosynthesis via de novo pathway; UMP from orotate: step 1/2. Functionally, catalyzes the transfer of a ribosyl phosphate group from 5-phosphoribose 1-diphosphate to orotate, leading to the formation of orotidine monophosphate (OMP). The sequence is that of Orotate phosphoribosyltransferase (URA5) from Cryptococcus neoformans var. neoformans serotype D (strain B-3501A) (Filobasidiella neoformans).